A 163-amino-acid polypeptide reads, in one-letter code: Protein-export protein SecB (163 aa).

Belongs to the SecB family. Homotetramer, a dimer of dimers. One homotetramer interacts with 1 SecA dimer.

The protein resides in the cytoplasm. One of the proteins required for the normal export of preproteins out of the cell cytoplasm. It is a molecular chaperone that binds to a subset of precursor proteins, maintaining them in a translocation-competent state. It also specifically binds to its receptor SecA. This is Protein-export protein SecB from Pseudomonas aeruginosa (strain LESB58).